The following is a 688-amino-acid chain: UvrABC system protein B (688 aa).

Positions 41–429 (ANFEAGLAKQ…AGEVTELVVR (389 aa)) constitute a Helicase ATP-binding domain. 54-61 (GVTGSGKT) lines the ATP pocket. A Beta-hairpin motif is present at residues 107-130 (YYDYYQPEAYVPSSDTFIEKDSSI). One can recognise a Helicase C-terminal domain in the interval 446–612 (QVDDLMSEIH…SVERPISDIM (167 aa)). The interval 616-646 (REDAAEKKSGKGRSKSRQVAEETPDYRAMKP) is disordered. Positions 633–645 (QVAEETPDYRAMK) are enriched in basic and acidic residues. One can recognise a UVR domain in the interval 650–685 (AGKLKSLEQKMYQHAKDLEFEAAAQIRDQIQKLKTA).

Belongs to the UvrB family. Forms a heterotetramer with UvrA during the search for lesions. Interacts with UvrC in an incision complex.

It localises to the cytoplasm. Functionally, the UvrABC repair system catalyzes the recognition and processing of DNA lesions. A damage recognition complex composed of 2 UvrA and 2 UvrB subunits scans DNA for abnormalities. Upon binding of the UvrA(2)B(2) complex to a putative damaged site, the DNA wraps around one UvrB monomer. DNA wrap is dependent on ATP binding by UvrB and probably causes local melting of the DNA helix, facilitating insertion of UvrB beta-hairpin between the DNA strands. Then UvrB probes one DNA strand for the presence of a lesion. If a lesion is found the UvrA subunits dissociate and the UvrB-DNA preincision complex is formed. This complex is subsequently bound by UvrC and the second UvrB is released. If no lesion is found, the DNA wraps around the other UvrB subunit that will check the other stand for damage. The polypeptide is UvrABC system protein B (Xanthomonas oryzae pv. oryzae (strain KACC10331 / KXO85)).